A 521-amino-acid polypeptide reads, in one-letter code: Bifunctional purine biosynthesis protein PurH (521 aa).

Residues 1-145 form the MGS-like domain; sequence MIKQALISVS…KNHRDVTVVV (145 aa).

This sequence belongs to the PurH family.

The catalysed reaction is (6R)-10-formyltetrahydrofolate + 5-amino-1-(5-phospho-beta-D-ribosyl)imidazole-4-carboxamide = 5-formamido-1-(5-phospho-D-ribosyl)imidazole-4-carboxamide + (6S)-5,6,7,8-tetrahydrofolate. The enzyme catalyses IMP + H2O = 5-formamido-1-(5-phospho-D-ribosyl)imidazole-4-carboxamide. It functions in the pathway purine metabolism; IMP biosynthesis via de novo pathway; 5-formamido-1-(5-phospho-D-ribosyl)imidazole-4-carboxamide from 5-amino-1-(5-phospho-D-ribosyl)imidazole-4-carboxamide (10-formyl THF route): step 1/1. It participates in purine metabolism; IMP biosynthesis via de novo pathway; IMP from 5-formamido-1-(5-phospho-D-ribosyl)imidazole-4-carboxamide: step 1/1. The polypeptide is Bifunctional purine biosynthesis protein PurH (Burkholderia ambifaria (strain MC40-6)).